Consider the following 56-residue polypeptide: 4Fe-4S ferredoxin FdxA (56 aa).

4Fe-4S ferredoxin-type domains follow at residues 1 to 28 and 29 to 56; these read MAYV…SSGD and DRYV…PVQA. Residues cysteine 9, cysteine 12, cysteine 15, cysteine 19, cysteine 38, cysteine 41, cysteine 44, and cysteine 48 each coordinate [4Fe-4S] cluster.

The cofactor is [4Fe-4S] cluster.

Its function is as follows. Ferredoxins are iron-sulfur proteins that transfer electrons in a wide variety of metabolic reactions. The polypeptide is 4Fe-4S ferredoxin FdxA (Gottschalkia acidurici (strain ATCC 7906 / DSM 604 / BCRC 14475 / CIP 104303 / KCTC 5404 / NCIMB 10678 / 9a) (Clostridium acidurici)).